The following is a 194-amino-acid chain: ATP-dependent Clp protease proteolytic subunit (194 aa).

The Nucleophile role is filled by S98. H123 is an active-site residue.

Belongs to the peptidase S14 family. As to quaternary structure, fourteen ClpP subunits assemble into 2 heptameric rings which stack back to back to give a disk-like structure with a central cavity, resembling the structure of eukaryotic proteasomes.

The protein resides in the cytoplasm. It carries out the reaction Hydrolysis of proteins to small peptides in the presence of ATP and magnesium. alpha-casein is the usual test substrate. In the absence of ATP, only oligopeptides shorter than five residues are hydrolyzed (such as succinyl-Leu-Tyr-|-NHMec, and Leu-Tyr-Leu-|-Tyr-Trp, in which cleavage of the -Tyr-|-Leu- and -Tyr-|-Trp bonds also occurs).. Cleaves peptides in various proteins in a process that requires ATP hydrolysis. Has a chymotrypsin-like activity. Plays a major role in the degradation of misfolded proteins. The chain is ATP-dependent Clp protease proteolytic subunit from Actinobacillus succinogenes (strain ATCC 55618 / DSM 22257 / CCUG 43843 / 130Z).